A 287-amino-acid polypeptide reads, in one-letter code: DegV domain-containing protein DR_0500 (287 aa).

In terms of domain architecture, DegV spans 7-280 (FAVVTDGGLD…PRALGVAAAP (274 aa)). Residues Ser-62 and Ser-93 each contribute to the hexadecanoate site.

Its function is as follows. May bind long-chain fatty acids, such as palmitate, and may play a role in lipid transport or fatty acid metabolism. The sequence is that of DegV domain-containing protein DR_0500 from Deinococcus radiodurans (strain ATCC 13939 / DSM 20539 / JCM 16871 / CCUG 27074 / LMG 4051 / NBRC 15346 / NCIMB 9279 / VKM B-1422 / R1).